Here is a 124-residue protein sequence, read N- to C-terminus: Small ribosomal subunit protein eS6 (124 aa).

It belongs to the eukaryotic ribosomal protein eS6 family.

This is Small ribosomal subunit protein eS6 from Methanococcus maripaludis (strain C7 / ATCC BAA-1331).